We begin with the raw amino-acid sequence, 833 residues long: Zinc transporter ZIP10 (833 aa).

A signal peptide spans 1–25 (MKVHIHTKFCLICLLTFIFHHCNHC). Residues 30–48 (DHGPEELHRHHRGMTESES) are compositionally biased toward basic and acidic residues. Disordered stretches follow at residues 30–54 (DHGP…FSVQ) and 137–167 (AENH…IKAD). Residues 137 to 147 (AENHTTTSVTS) show a composition bias toward polar residues. The span at 152–167 (KCDPEKEAAELPIKAD) shows a compositional bias: basic and acidic residues. N-linked (GlcNAc...) asparagine glycosylation is found at Asn-191 and Asn-198. The span at 200 to 209 (SVAHSEHGEP) shows a compositional bias: basic and acidic residues. Disordered stretches follow at residues 200 to 257 (SVAH…NHDH) and 271 to 335 (RVHS…EDDR). A glycan (N-linked (GlcNAc...) asparagine) is linked at Asn-218. Positions 229–241 (VKVRRKEKGKRKK) are enriched in basic residues. 2 stretches are compositionally biased toward basic and acidic residues: residues 281 to 315 (HLPE…EAPH) and 326 to 335 (SHKDQSEDDR). An N-linked (GlcNAc...) asparagine glycan is attached at Asn-341. The next 2 helical transmembrane spans lie at 413–433 (IISI…VPII) and 440–460 (FLLT…ALLH). The tract at residues 466–485 (QGGHDHSHQHTHGHGHSHGH) is disordered. Residues 497-517 (VLKGLVALGGIYLLFIIEHCI) form a helical membrane-spanning segment. Thr-538 and Thr-555 each carry phosphothreonine. Position 593 is a phosphoserine (Ser-593). The next 4 membrane-spanning stretches (helical) occupy residues 689 to 709 (AIGA…IAVF), 734 to 754 (IVYN…GTAV), 761 to 781 (ITLW…LVDM), and 803 to 823 (FILQ…IALY).

It belongs to the ZIP transporter (TC 2.A.5) family. In terms of assembly, interacts with SLC39A6. This interaction triggers cells to undergo EMT and mitosis. Found in a complex with SLC39A6, SLC39A10 and with the 'Ser-727' phosphorylated form of STAT3 throughout mitosis. Found in a complex with SLC39A6, SLC39A10 and with NCAM1; this complex controls NCAM1 phosphorylation and integration into focal adhesion complexes during epithelial-tomesenchymal transition. Found in a complex with SLC39A6, SLC39A10 and with GSK3B that controls NCAM1 phosphorylation. Post-translationally, undergoes N-terminal ectodomain shedding. In terms of tissue distribution, expressed in the liver, kidney and brain.

Its subcellular location is the cell membrane. The protein resides in the apical cell membrane. The enzyme catalyses Zn(2+)(in) = Zn(2+)(out). Zinc-influx transporter. When associated with SLC39A6, the heterodimer formed by SLC39A10 and SLC39A6 mediates cellular zinc uptake to trigger cells to undergo epithelial-to-mesenchymal transition (EMT). mediates cellular zinc uptake to trigger cells to undergo epithelial-to-mesenchymal transition (EMT). SLC39A10-SLC39A6 heterodimers play also an essentiel role in initiating mitosis by importing zinc into cells to initiate a pathway resulting in the onset of mitosis. Plays an important for both mature B-cell maintenance and humoral immune responses. When associated with SLC39A10, the heterodimer controls NCAM1 phosphorylation and integration into focal adhesion complexes during EMT. The sequence is that of Zinc transporter ZIP10 from Mus musculus (Mouse).